A 371-amino-acid polypeptide reads, in one-letter code: MSIAKIAGVVLGSAALVAGHGYVSGAVVDGQYYSGYDMSYHYMSDPPKVIGWSTDATDLGFVDGSSYADADIICHKNAKNGAISAEIAAGKQVELQWTDWPESHKGPVITYLANCNGDCATVDKTQLEFFKIDEKGLISGSDNTWASDNLISSNNSWTVTIPSSIAAGNYVMRHEIIALHSAGNKDGAQNYPQCLNFKVTGGGSDKPEGTLGTALYKDTDPGILVNIYQTLSSYTIPGPALYSGSSSGSSSGSSGSSSAAPSATASASASATAAPVQTSTATAYQTSTAVASVTVTGSSPAQTHVQATSSSAAASTPTASSGASSGSGSSSSSSDLTDYFNSLSADELLNVIKQTLSWLVTDKIHARDISA.

The first 25 residues, 1–25 (MSIAKIAGVVLGSAALVAGHGYVSG), serve as a signal peptide directing secretion. Residues His20 and His104 each coordinate Cu(2+). 2 cysteine pairs are disulfide-bonded: Cys74/Cys194 and Cys115/Cys119. A glycan (N-linked (GlcNAc...) asparagine) is linked at Asn154. His180 and Gln189 together coordinate O2. A Cu(2+)-binding site is contributed by Tyr191. The interval 304–332 (HVQATSSSAAASTPTASSGASSGSGSSSS) is disordered. Low complexity predominate over residues 307–332 (ATSSSAAASTPTASSGASSGSGSSSS).

The protein belongs to the polysaccharide monooxygenase AA9 family. The cofactor is Cu(2+).

The protein resides in the secreted. It carries out the reaction [(1-&gt;4)-beta-D-glucosyl]n+m + reduced acceptor + O2 = 4-dehydro-beta-D-glucosyl-[(1-&gt;4)-beta-D-glucosyl]n-1 + [(1-&gt;4)-beta-D-glucosyl]m + acceptor + H2O.. Its function is as follows. Lytic polysaccharide monooxygenase (LPMO) that depolymerizes crystalline and amorphous polysaccharides via the oxidation of scissile alpha- or beta-(1-4)-glycosidic bonds, yielding C1 and C4 oxidation products. Catalysis by LPMOs requires the reduction of the active-site copper from Cu(II) to Cu(I) by a reducing agent and H(2)O(2) or O(2) as a cosubstrate. In addition to cellulose, also cleaves the beta-(1!4)-glucan backbone of tamarind xyloglucan, irrespective of substitutions which contrasts with AA9A xyloglucan cleavage activity. This chain is AA9 family lytic polysaccharide monooxygenase B, found in Aspergillus tamarii.